Here is a 240-residue protein sequence, read N- to C-terminus: 6-phosphogluconolactonase (240 aa).

This sequence belongs to the glucosamine/galactosamine-6-phosphate isomerase family. 6-phosphogluconolactonase subfamily.

It catalyses the reaction 6-phospho-D-glucono-1,5-lactone + H2O = 6-phospho-D-gluconate + H(+). Its pathway is carbohydrate degradation; pentose phosphate pathway; D-ribulose 5-phosphate from D-glucose 6-phosphate (oxidative stage): step 2/3. Functionally, hydrolysis of 6-phosphogluconolactone to 6-phosphogluconate. The polypeptide is 6-phosphogluconolactonase (pgl) (Synechocystis sp. (strain ATCC 27184 / PCC 6803 / Kazusa)).